The chain runs to 60 residues: Cytotoxin sagitoxin (60 aa).

Intrachain disulfides connect cysteine 3–cysteine 21, cysteine 14–cysteine 38, cysteine 42–cysteine 53, and cysteine 54–cysteine 59.

It belongs to the three-finger toxin family. Short-chain subfamily. Type IA cytotoxin sub-subfamily. As to quaternary structure, monomer in solution; Homodimer and oligomer (homohexamer) in the presence of negatively charged lipids forming a pore with a size ranging between 20 and 30 Angstroms. Expressed by the venom gland.

It localises to the secreted. The protein localises to the target cell membrane. Functionally, shows cytolytic activity on many different cells by forming pore in lipid membranes. In vivo, increases heart rate or kill the animal by cardiac arrest. In addition, it binds to heparin with high affinity, interacts with Kv channel-interacting protein 1 (KCNIP1) in a calcium-independent manner, and binds to integrin alpha-V/beta-3 (ITGAV/ITGB3) with moderate affinity. The chain is Cytotoxin sagitoxin from Naja sagittifera (Andaman cobra).